Consider the following 492-residue polypeptide: Cysteine--tRNA ligase (492 aa).

Cys31 contacts Zn(2+). Positions 33-43 (PTVYGDPHLGH) match the 'HIGH' region motif. Residues Cys226, His251, and Glu255 each coordinate Zn(2+). A 'KMSKS' region motif is present at residues 283–287 (KMGKS). Lys286 serves as a coordination point for ATP.

The protein belongs to the class-I aminoacyl-tRNA synthetase family. In terms of assembly, monomer. Zn(2+) serves as cofactor.

The protein localises to the cytoplasm. The enzyme catalyses tRNA(Cys) + L-cysteine + ATP = L-cysteinyl-tRNA(Cys) + AMP + diphosphate. The protein is Cysteine--tRNA ligase of Azobacteroides pseudotrichonymphae genomovar. CFP2.